The primary structure comprises 95 residues: DNA-directed RNA polymerase subunit Rpo6 (95 aa).

Belongs to the archaeal Rpo6/eukaryotic RPB6 RNA polymerase subunit family. As to quaternary structure, part of the 13-subunit RNA polymerase complex.

Its subcellular location is the cytoplasm. The enzyme catalyses RNA(n) + a ribonucleoside 5'-triphosphate = RNA(n+1) + diphosphate. DNA-dependent RNA polymerase (RNAP) catalyzes the transcription of DNA into RNA using the four ribonucleoside triphosphates as substrates. The chain is DNA-directed RNA polymerase subunit Rpo6 from Saccharolobus solfataricus (strain ATCC 35092 / DSM 1617 / JCM 11322 / P2) (Sulfolobus solfataricus).